A 302-amino-acid chain; its full sequence is N-acetylmuramic acid 6-phosphate etherase (302 aa).

The SIS domain occupies 55-218 (AYPKFDQGGR…STGIMVKSGK (164 aa)). Glutamate 83 (proton donor) is an active-site residue. Residue glutamate 114 is part of the active site.

Belongs to the GCKR-like family. MurNAc-6-P etherase subfamily. In terms of assembly, homodimer.

It catalyses the reaction N-acetyl-D-muramate 6-phosphate + H2O = N-acetyl-D-glucosamine 6-phosphate + (R)-lactate. It functions in the pathway amino-sugar metabolism; N-acetylmuramate degradation. Functionally, specifically catalyzes the cleavage of the D-lactyl ether substituent of MurNAc 6-phosphate, producing GlcNAc 6-phosphate and D-lactate. This chain is N-acetylmuramic acid 6-phosphate etherase, found in Levilactobacillus brevis (strain ATCC 367 / BCRC 12310 / CIP 105137 / JCM 1170 / LMG 11437 / NCIMB 947 / NCTC 947) (Lactobacillus brevis).